A 607-amino-acid polypeptide reads, in one-letter code: Glutamine--fructose-6-phosphate aminotransferase [isomerizing] (607 aa).

The Nucleophile; for GATase activity role is filled by C2. In terms of domain architecture, Glutamine amidotransferase type-2 spans 2-217; the sequence is CGIIGIIGND…DGDWAVLTRN (216 aa). 2 SIS domains span residues 283–422 and 455–597; these read IGID…ARGA and VCHD…VDQP. The active-site For Fru-6P isomerization activity is K602.

Homodimer.

The protein localises to the cytoplasm. The enzyme catalyses D-fructose 6-phosphate + L-glutamine = D-glucosamine 6-phosphate + L-glutamate. Functionally, catalyzes the first step in hexosamine metabolism, converting fructose-6P into glucosamine-6P using glutamine as a nitrogen source. The sequence is that of Glutamine--fructose-6-phosphate aminotransferase [isomerizing] from Brucella melitensis biotype 1 (strain ATCC 23456 / CCUG 17765 / NCTC 10094 / 16M).